The chain runs to 249 residues: Methylthioribulose-1-phosphate dehydratase (249 aa).

Residues His-103 and His-105 each coordinate Zn(2+).

This sequence belongs to the aldolase class II family. MtnB subfamily. Requires Zn(2+) as cofactor.

The enzyme catalyses 5-(methylsulfanyl)-D-ribulose 1-phosphate = 5-methylsulfanyl-2,3-dioxopentyl phosphate + H2O. It functions in the pathway amino-acid biosynthesis; L-methionine biosynthesis via salvage pathway; L-methionine from S-methyl-5-thio-alpha-D-ribose 1-phosphate: step 2/6. Catalyzes the dehydration of methylthioribulose-1-phosphate (MTRu-1-P) into 2,3-diketo-5-methylthiopentyl-1-phosphate (DK-MTP-1-P). In Leptospira interrogans serogroup Icterohaemorrhagiae serovar Lai (strain 56601), this protein is Methylthioribulose-1-phosphate dehydratase.